Reading from the N-terminus, the 570-residue chain is Dihydroxy-acid dehydratase (570 aa).

Positions 1–25 (MSQQDSPANADHRRRHSSIVVDGPG) are disordered. Cysteine 60 lines the [2Fe-2S] cluster pocket. Mg(2+) is bound at residue aspartate 92. A [2Fe-2S] cluster-binding site is contributed by cysteine 133. Aspartate 134 and lysine 135 together coordinate Mg(2+). Lysine 135 carries the N6-carboxylysine modification. Cysteine 202 is a binding site for [2Fe-2S] cluster. Glutamate 453 contributes to the Mg(2+) binding site. Serine 479 functions as the Proton acceptor in the catalytic mechanism.

It belongs to the IlvD/Edd family. In terms of assembly, homodimer. It depends on [2Fe-2S] cluster as a cofactor. Mg(2+) is required as a cofactor.

The catalysed reaction is (2R)-2,3-dihydroxy-3-methylbutanoate = 3-methyl-2-oxobutanoate + H2O. The enzyme catalyses (2R,3R)-2,3-dihydroxy-3-methylpentanoate = (S)-3-methyl-2-oxopentanoate + H2O. It participates in amino-acid biosynthesis; L-isoleucine biosynthesis; L-isoleucine from 2-oxobutanoate: step 3/4. Its pathway is amino-acid biosynthesis; L-valine biosynthesis; L-valine from pyruvate: step 3/4. Functionally, functions in the biosynthesis of branched-chain amino acids. Catalyzes the dehydration of (2R,3R)-2,3-dihydroxy-3-methylpentanoate (2,3-dihydroxy-3-methylvalerate) into 2-oxo-3-methylpentanoate (2-oxo-3-methylvalerate) and of (2R)-2,3-dihydroxy-3-methylbutanoate (2,3-dihydroxyisovalerate) into 2-oxo-3-methylbutanoate (2-oxoisovalerate), the penultimate precursor to L-isoleucine and L-valine, respectively. The chain is Dihydroxy-acid dehydratase from Chromohalobacter salexigens (strain ATCC BAA-138 / DSM 3043 / CIP 106854 / NCIMB 13768 / 1H11).